Here is a 567-residue protein sequence, read N- to C-terminus: Dihydrolipoyllysine-residue acetyltransferase component of pyruvate dehydrogenase complex (567 aa).

2 consecutive Lipoyl-binding domains span residues 2-75 and 108-181; these read SKQI…LVLE and IVEV…MRFE. N6-lipoyllysine is present on residues Lys41 and Lys147. The segment covering 192-238 has biased composition (low complexity); the sequence is SAPASTSAPQTAAPATTAQAPQAAAPDTTAQAPQAAAPDTTAQAAQS. Residues 192 to 249 are disordered; the sequence is SAPASTSAPQTAAPATTAQAPQAAAPDTTAQAPQAAAPDTTAQAAQSNNNVSGLSQEQ. Polar residues predominate over residues 239 to 249; that stretch reads NNNVSGLSQEQ. The region spanning 258-295 is the Peripheral subunit-binding (PSBD) domain; that stretch reads HATPVIRRLAREFGVNLDKVKGTGRKGRIVKEDIEAYV. Catalysis depends on residues Cys484, His540, and Asp544.

Belongs to the 2-oxoacid dehydrogenase family. Forms a 24-polypeptide structural core with octahedral symmetry. Requires (R)-lipoate as cofactor.

It carries out the reaction N(6)-[(R)-dihydrolipoyl]-L-lysyl-[protein] + acetyl-CoA = N(6)-[(R)-S(8)-acetyldihydrolipoyl]-L-lysyl-[protein] + CoA. Its function is as follows. The pyruvate dehydrogenase complex catalyzes the overall conversion of pyruvate to acetyl-CoA and CO(2). It contains multiple copies of three enzymatic components: pyruvate dehydrogenase (E1), dihydrolipoamide acetyltransferase (E2) and lipoamide dehydrogenase (E3). The protein is Dihydrolipoyllysine-residue acetyltransferase component of pyruvate dehydrogenase complex (aceF) of Haemophilus influenzae (strain ATCC 51907 / DSM 11121 / KW20 / Rd).